The primary structure comprises 171 residues: Mitochondrial import inner membrane translocase subunit Tim17-A (171 aa).

Cysteines 9 and 78 form a disulfide. 3 consecutive transmembrane segments (helical) span residues 17-37 (CGGA…FKGF), 63-77 (GGSF…STID), and 113-133 (VGSA…GILL). The disordered stretch occupies residues 144 to 171 (GPQFTEDHSQLPSSQLPSSPFGDYRQYQ). The segment covering 153 to 163 (QLPSSQLPSSP) has biased composition (low complexity).

It belongs to the Tim17/Tim22/Tim23 family. As to quaternary structure, component of the TIM23 complex at least composed of TIMM23, TIMM17 (TIMM17A or TIMM17B) and TIMM50. The complex interacts with the TIMM44 component of the PAM complex and with DNAJC15. In terms of processing, degraded by YMEL1 downstream of the integrated stress response (ISR).

The protein resides in the mitochondrion inner membrane. Essential component of the TIM23 complex, a complex that mediates the translocation of transit peptide-containing proteins across the mitochondrial inner membrane. This is Mitochondrial import inner membrane translocase subunit Tim17-A (Timm17a) from Mus musculus (Mouse).